The sequence spans 88 residues: HssA/B-like protein 11 (88 aa).

This sequence belongs to the hssA/B family.

This is HssA/B-like protein 11 (hssl11) from Dictyostelium discoideum (Social amoeba).